We begin with the raw amino-acid sequence, 398 residues long: MAKLTVKDVELKGKKVLVRVDFNVPIKDGVITNDNRITAALPTIKYILEQGGRAVLFSHLGRVKEESDKAGKSLAPVAKALSEKLGQDVVFPGATRGAELEAAINELKDGEILLVENTRFEDIDGKKESKNDPELGKYWASLGDGIFVNDAFGTAHRAHASNVGISANVEKAVAGFLLENEIAYIQEAVEAPERPFVAILGGSKVSDKIGVIENLLSKADKVIIGGGMAYTFLKAQGYEIGTSLVEDDKLDLAKELLEKAAGKLILPLDHKVANAFAGYTEVKETADQNIPAGFMGLDVANKTIADYNTQLEGAKTVVWNGPVGVFENPDFQAGTVGLMEAIVKQPGVKSIIGGGDSAAAAINLGYAEKFSWISTGGGASMELLEGKVLPGLAALTEK.

Substrate-binding positions include 21-23, Arg-36, 59-62, Arg-119, and Arg-157; these read DFN and HLGR. ATP is bound by residues Lys-208, Gly-296, Glu-327, and 354–357; that span reads GGDS.

This sequence belongs to the phosphoglycerate kinase family. In terms of assembly, monomer.

The protein localises to the cytoplasm. It catalyses the reaction (2R)-3-phosphoglycerate + ATP = (2R)-3-phospho-glyceroyl phosphate + ADP. Its pathway is carbohydrate degradation; glycolysis; pyruvate from D-glyceraldehyde 3-phosphate: step 2/5. In Lactococcus lactis subsp. cremoris (strain MG1363), this protein is Phosphoglycerate kinase.